We begin with the raw amino-acid sequence, 504 residues long: Cytochrome P450 71B4 (504 aa).

Residues 1 to 21 (MVSLLSFFLLLLVPIFFLLIF) traverse the membrane as a helical segment. A heme-binding site is contributed by C446.

Belongs to the cytochrome P450 family. It depends on heme as a cofactor.

Its subcellular location is the membrane. The chain is Cytochrome P450 71B4 (CYP71B4) from Arabidopsis thaliana (Mouse-ear cress).